The primary structure comprises 231 residues: CLAVATA3/ESR (CLE)-related protein 4B-1 (231 aa).

An N-terminal signal peptide occupies residues 1 to 21; sequence MATNTMLCLLILSVVLALAFA. The tract at residues 21 to 83 is required for secretion from the host cytoplasm to the host apoplasm; sequence ATNKKGDEEP…SNLLPNNNWM (63 aa). A glycan (N-linked (GlcNAc...) asparagine) is linked at asparagine 32. The tract at residues 116-231 is disordered; that stretch reads RKTGMHSQRH…APAGPDPIHH (116 aa). 2 stretches are compositionally biased toward basic and acidic residues: residues 125–137 and 144–221; these read HHEE…EKRV and PIHH…EKRG. An A-1 repeat occupies 127 to 135; it reads EETTLEQEK. The interval 127–219 is 5 X approximate repeat A; it reads EETTLEQEKR…HEETTFEQEK (93 aa). A CLE-1 repeat occupies 136-147; it reads RVAGAGPDPIHH. Residues 136–231 form a 5 X approximate repeat CLE region; the sequence is RVAGAGPDPI…APAGPDPIHH (96 aa). The stretch at 148 to 156 is one A-2 repeat; sequence QDTTLEQEK. The stretch at 157–168 is one CLE-2 repeat; the sequence is RAVPAGPDPKHH. An A-3 repeat occupies 169–177; sequence EETTLEQEK. Residues 178-189 form a CLE-3 repeat; sequence RAVPAGPDPKHH. The A-4 repeat unit spans residues 190-198; that stretch reads EETTLEQEK. Residues 199-210 form a CLE-4 repeat; sequence RAVPAGPDPKHH. One copy of the A-5 repeat lies at 211-219; sequence EETTFEQEK. The CLE-5 repeat unit spans residues 220–231; sequence RGAPAGPDPIHH.

This sequence belongs to the CLV3/ESR signal peptide family. Highly expressed exclusively within the dorsal esophageal gland cell during syncytium formation in host plants.

Its subcellular location is the secreted. The protein resides in the host cytoplasm. It localises to the host extracellular space. It is found in the extracellular space. The protein localises to the apoplast. Mimics host plant CLE extracellular signal peptides that regulate cell fate. May play a role in the differentiation or division of feeding cells (syncytia) induced in plant roots during infection. This is CLAVATA3/ESR (CLE)-related protein 4B-1 (CLE-4B-1) from Globodera rostochiensis (Golden nematode worm).